A 677-amino-acid polypeptide reads, in one-letter code: Threonine--tRNA ligase (677 aa).

In terms of domain architecture, TGS spans 1 to 59 (MAQATISITVNGEAKEVEATTTGVELFAEDKNIIAVKINGENRDLYTPLNDGDTVDPIA). The catalytic stretch occupies residues 255-561 (DHRKLGAEMD…LLEHYAGAFP (307 aa)). Cys360, His411, and His538 together coordinate Zn(2+).

Belongs to the class-II aminoacyl-tRNA synthetase family. In terms of assembly, homodimer. Zn(2+) is required as a cofactor.

The protein localises to the cytoplasm. The enzyme catalyses tRNA(Thr) + L-threonine + ATP = L-threonyl-tRNA(Thr) + AMP + diphosphate + H(+). Its function is as follows. Catalyzes the attachment of threonine to tRNA(Thr) in a two-step reaction: L-threonine is first activated by ATP to form Thr-AMP and then transferred to the acceptor end of tRNA(Thr). Also edits incorrectly charged L-seryl-tRNA(Thr). This chain is Threonine--tRNA ligase, found in Bifidobacterium longum (strain DJO10A).